The following is a 461-amino-acid chain: Glucan endo-1,3-beta-glucosidase (461 aa).

A signal peptide spans 1–23 (MPLLILLMLLAAGAAGAESATPS). Glutamate 123 functions as the Proton donor in the catalytic mechanism. Glutamate 265 (nucleophile) is an active-site residue. Residues 350–375 (GASVAPTPSPNPSPNPSPKPAPSGGG) form a disordered region. Residues 356 to 370 (TPSPNPSPNPSPKPA) are compositionally biased toward pro residues. The cysteines at positions 378 and 439 are disulfide-linked.

It belongs to the glycosyl hydrolase 17 family. Contains two additional disulfide bonds.

The enzyme catalyses Hydrolysis of (1-&gt;3)-beta-D-glucosidic linkages in (1-&gt;3)-beta-D-glucans.. In terms of biological role, is thought to be an important plant defense-related product against fungal pathogens. This chain is Glucan endo-1,3-beta-glucosidase (GLC1), found in Triticum aestivum (Wheat).